Here is a 419-residue protein sequence, read N- to C-terminus: UDP-N-acetylglucosamine 1-carboxyvinyltransferase (419 aa).

22–23 is a binding site for phosphoenolpyruvate; that stretch reads KN. Residue arginine 91 coordinates UDP-N-acetyl-alpha-D-glucosamine. Cysteine 115 (proton donor) is an active-site residue. Cysteine 115 bears the 2-(S-cysteinyl)pyruvic acid O-phosphothioketal mark. UDP-N-acetyl-alpha-D-glucosamine is bound by residues 120-124, 160-163, aspartate 305, and valine 327; these read RPVDL and KVSV.

This sequence belongs to the EPSP synthase family. MurA subfamily.

It is found in the cytoplasm. The catalysed reaction is phosphoenolpyruvate + UDP-N-acetyl-alpha-D-glucosamine = UDP-N-acetyl-3-O-(1-carboxyvinyl)-alpha-D-glucosamine + phosphate. Its pathway is cell wall biogenesis; peptidoglycan biosynthesis. In terms of biological role, cell wall formation. Adds enolpyruvyl to UDP-N-acetylglucosamine. This chain is UDP-N-acetylglucosamine 1-carboxyvinyltransferase, found in Escherichia coli O157:H7.